A 728-amino-acid polypeptide reads, in one-letter code: Catalase B (728 aa).

Residues His-107 and Asn-180 contribute to the active site. A heme-binding site is contributed by Tyr-394.

It belongs to the catalase family. Heme serves as cofactor.

The protein resides in the secreted. The enzyme catalyses 2 H2O2 = O2 + 2 H2O. In terms of biological role, occurs in almost all aerobically respiring organisms and serves to protect cells from the toxic effects of hydrogen peroxide. In Ajellomyces capsulatus (Darling's disease fungus), this protein is Catalase B (CATB).